A 195-amino-acid chain; its full sequence is Large ribosomal subunit protein eL15 (195 aa).

Residues 174–195 (GHGRLGSAKSRPSIRANGRLRR) are disordered.

This sequence belongs to the eukaryotic ribosomal protein eL15 family.

The chain is Large ribosomal subunit protein eL15 from Picrophilus torridus (strain ATCC 700027 / DSM 9790 / JCM 10055 / NBRC 100828 / KAW 2/3).